Here is a 573-residue protein sequence, read N- to C-terminus: DNA ligase (573 aa).

Glu250 is a binding site for ATP. Catalysis depends on Lys252, which acts as the N6-AMP-lysine intermediate. Positions 257, 272, 301, 342, 432, and 438 each coordinate ATP.

Belongs to the ATP-dependent DNA ligase family. The cofactor is Mg(2+).

The catalysed reaction is ATP + (deoxyribonucleotide)n-3'-hydroxyl + 5'-phospho-(deoxyribonucleotide)m = (deoxyribonucleotide)n+m + AMP + diphosphate.. DNA ligase that seals nicks in double-stranded DNA during DNA replication, DNA recombination and DNA repair. The sequence is that of DNA ligase from Methanococcus maripaludis (strain DSM 14266 / JCM 13030 / NBRC 101832 / S2 / LL).